The following is a 162-amino-acid chain: NADH-quinone oxidoreductase subunit C (162 aa).

It belongs to the complex I 30 kDa subunit family. In terms of assembly, NDH-1 is composed of 14 different subunits. Subunits NuoB, C, D, E, F, and G constitute the peripheral sector of the complex.

The protein localises to the cell inner membrane. The enzyme catalyses a quinone + NADH + 5 H(+)(in) = a quinol + NAD(+) + 4 H(+)(out). NDH-1 shuttles electrons from NADH, via FMN and iron-sulfur (Fe-S) centers, to quinones in the respiratory chain. The immediate electron acceptor for the enzyme in this species is believed to be ubiquinone. Couples the redox reaction to proton translocation (for every two electrons transferred, four hydrogen ions are translocated across the cytoplasmic membrane), and thus conserves the redox energy in a proton gradient. In Trichlorobacter lovleyi (strain ATCC BAA-1151 / DSM 17278 / SZ) (Geobacter lovleyi), this protein is NADH-quinone oxidoreductase subunit C.